Consider the following 296-residue polypeptide: Sulfotransferase 1B1 (296 aa).

48–53 contributes to the 3'-phosphoadenylyl sulfate binding site; the sequence is KSGTTW. Residue 107–109 participates in substrate binding; the sequence is KTH. Histidine 109 (proton acceptor) is an active-site residue. Residues arginine 131, serine 139, tyrosine 194, 228–233, and 258–260 each bind 3'-phosphoadenylyl sulfate; these read TSFEMM and RKG.

Belongs to the sulfotransferase 1 family. In terms of tissue distribution, expressed highly in the colon, kidney and small intestine of male and female dogs. Highly expressed in the jejunum and ileum of the male dog than the female dog, which displayed more expression in duodenum (at protein level).

Its subcellular location is the cytoplasm. The catalysed reaction is a phenol + 3'-phosphoadenylyl sulfate = an aryl sulfate + adenosine 3',5'-bisphosphate + H(+). The enzyme catalyses 3,3',5-triiodo-L-thyronine + 3'-phosphoadenylyl sulfate = 3,3',5-triiodo-L-thyronine sulfate + adenosine 3',5'-bisphosphate + H(+). It catalyses the reaction 3,3',5'-triiodo-L-thyronine + 3'-phosphoadenylyl sulfate = 3,3',5'-triiodo-L-thyronine sulfate + adenosine 3',5'-bisphosphate + H(+). It carries out the reaction 3,3'-diiodo-L-thyronine + 3'-phosphoadenylyl sulfate = 3,3'-diiodo-L-thyronine sulfate + adenosine 3',5'-bisphosphate + H(+). The catalysed reaction is 4-ethylphenol + 3'-phosphoadenylyl sulfate = 4-ethylphenyl sulfate + adenosine 3',5'-bisphosphate + H(+). Sulfotransferase that utilizes 3'-phospho-5'-adenylyl sulfate (PAPS) as sulfonate donor to catalyze the sulfate conjugation of dopamine, small phenols such as 1-naphthol and p-nitrophenol and thyroid hormones, including 3,3'-diiodothyronine, triidothyronine (T3) and reverse triiodothyronine (rT3). May play a role in gut microbiota-host metabolic interaction. O-sulfonates 4-ethylphenol (4-EP), a dietary tyrosine-derived metabolite produced by gut bacteria. The product 4-EPS crosses the blood-brain barrier and may negatively regulate oligodendrocyte maturation and myelination, affecting the functional connectivity of different brain regions associated with the limbic system. This Canis lupus familiaris (Dog) protein is Sulfotransferase 1B1 (SULT1B1).